The following is a 380-amino-acid chain: L-lactate dehydrogenase (380 aa).

In terms of domain architecture, FMN hydroxy acid dehydrogenase spans 1–380; the sequence is MIISSPNDYR…TRDSLVGLPR (380 aa). Position 24 (Tyr-24) interacts with substrate. The FMN site is built by Ser-106 and Gln-127. Residue Tyr-129 coordinates substrate. Residue Thr-155 coordinates FMN. Arg-164 contacts substrate. Lys-251 lines the FMN pocket. The active-site Proton acceptor is the His-275. Residue Arg-278 participates in substrate binding. An FMN-binding site is contributed by 306–330; the sequence is DSGIRTGLDVVRMLALGAKGVLLGR.

The protein belongs to the FMN-dependent alpha-hydroxy acid dehydrogenase family. FMN is required as a cofactor.

The protein localises to the cell inner membrane. The enzyme catalyses (S)-lactate + A = pyruvate + AH2. Its function is as follows. Catalyzes the conversion of L-lactate to pyruvate. Is coupled to the respiratory chain. In Azorhizobium caulinodans (strain ATCC 43989 / DSM 5975 / JCM 20966 / LMG 6465 / NBRC 14845 / NCIMB 13405 / ORS 571), this protein is L-lactate dehydrogenase.